Consider the following 252-residue polypeptide: 5-oxoprolinase subunit A (252 aa).

It belongs to the LamB/PxpA family. In terms of assembly, forms a complex composed of PxpA, PxpB and PxpC.

The catalysed reaction is 5-oxo-L-proline + ATP + 2 H2O = L-glutamate + ADP + phosphate + H(+). Its function is as follows. Catalyzes the cleavage of 5-oxoproline to form L-glutamate coupled to the hydrolysis of ATP to ADP and inorganic phosphate. The protein is 5-oxoprolinase subunit A of Corynebacterium glutamicum (strain ATCC 13032 / DSM 20300 / JCM 1318 / BCRC 11384 / CCUG 27702 / LMG 3730 / NBRC 12168 / NCIMB 10025 / NRRL B-2784 / 534).